The following is a 525-amino-acid chain: GMP synthase [glutamine-hydrolyzing] (525 aa).

The Glutamine amidotransferase type-1 domain maps to 9-207 (RILILDFGSQ…VLGICGCEAL (199 aa)). Catalysis depends on Cys-86, which acts as the Nucleophile. Active-site residues include His-181 and Glu-183. Residues 208 to 400 (WTSATIIEDA…LGLPYDMLYR (193 aa)) form the GMPS ATP-PPase domain. 235-241 (SGGVDSS) lines the ATP pocket.

In terms of assembly, homodimer.

It catalyses the reaction XMP + L-glutamine + ATP + H2O = GMP + L-glutamate + AMP + diphosphate + 2 H(+). It functions in the pathway purine metabolism; GMP biosynthesis; GMP from XMP (L-Gln route): step 1/1. Its function is as follows. Catalyzes the synthesis of GMP from XMP. The protein is GMP synthase [glutamine-hydrolyzing] of Yersinia pseudotuberculosis serotype IB (strain PB1/+).